The following is a 623-amino-acid chain: Kelch repeat and BTB domain-containing protein 12 (623 aa).

A BTB domain is found at 25–92 (TDVVLVAEGV…MYSSNLPLTA (68 aa)). The BACK domain maps to 127–236 (CLGIYYYARD…GVDYLKGTMK (110 aa)). 4 Kelch repeats span residues 390 to 440 (NLYL…RMKG), 441 to 496 (RLYV…ALNG), 498 to 551 (IYVL…ASNA), and 557 to 607 (KLYV…LVAN).

The chain is Kelch repeat and BTB domain-containing protein 12 (kbtbd12) from Danio rerio (Zebrafish).